Here is a 933-residue protein sequence, read N- to C-terminus: Exosome complex exonuclease RRP44 homolog A (933 aa).

The PINc domain occupies 50 to 163 (KIIVVDTNVV…LVTNDRENKR (114 aa)). In terms of domain architecture, CSD1 spans 217-321 (QEHKPMSEIT…NVDDAPRTSN (105 aa)). Residues 296 to 336 (AEEDDEEDDTVHLAPDNVDDAPRTSNLSHETSGDKNAAPVR) are disordered. A CSD2 domain is found at 371–438 (ALFVSKDRRI…ETEVVLIEND (68 aa)). The 330-residue stretch at 469 to 798 (RQDLRHLLVF…FVHRLLAASL (330 aa)) folds into the RNB domain. The Mg(2+) site is built by aspartate 481 and aspartate 490.

The protein belongs to the RNR ribonuclease family. Probable component of the RNA exosome complex. The cofactor is Mg(2+).

Its subcellular location is the nucleus. Its function is as follows. Catalytic component of the RNA exosome complex which has 3'-&gt;5' exoribonuclease activity and participates in a multitude of cellular RNA processing and degradation events. Required for 5.8S rRNA intermediate processing and the degradation of 5' external transcribed spacer (5' ETS), a maturation by-product of rRNA synthesis. Is not involved in the degradation of turnip crinkle virus (TCV) RNA and significant virus resistance. Required for normal development of female gametophytes and early embryogenesis. This chain is Exosome complex exonuclease RRP44 homolog A, found in Arabidopsis thaliana (Mouse-ear cress).